The following is a 135-amino-acid chain: uncharacterized protein (135 aa).

3 consecutive transmembrane segments (helical) span residues 13–35 (AKVI…AMYL), 82–101 (VAVF…LLSI), and 108–130 (IYRI…PLIL).

The protein resides in the cell membrane. This is an uncharacterized protein from Archaeoglobus fulgidus (strain ATCC 49558 / DSM 4304 / JCM 9628 / NBRC 100126 / VC-16).